The primary structure comprises 393 residues: Sulfate adenylyltransferase (393 aa).

The protein belongs to the sulfate adenylyltransferase family.

The catalysed reaction is sulfate + ATP + H(+) = adenosine 5'-phosphosulfate + diphosphate. It functions in the pathway sulfur metabolism; hydrogen sulfide biosynthesis; sulfite from sulfate: step 1/3. In Synechococcus sp. (strain JA-3-3Ab) (Cyanobacteria bacterium Yellowstone A-Prime), this protein is Sulfate adenylyltransferase.